The sequence spans 391 residues: 4-hydroxy-3-methylbut-2-en-1-yl diphosphate synthase (flavodoxin) (391 aa).

[4Fe-4S] cluster contacts are provided by cysteine 286, cysteine 289, cysteine 321, and glutamate 328.

It belongs to the IspG family. Requires [4Fe-4S] cluster as cofactor.

The enzyme catalyses (2E)-4-hydroxy-3-methylbut-2-enyl diphosphate + oxidized [flavodoxin] + H2O + 2 H(+) = 2-C-methyl-D-erythritol 2,4-cyclic diphosphate + reduced [flavodoxin]. The protein operates within isoprenoid biosynthesis; isopentenyl diphosphate biosynthesis via DXP pathway; isopentenyl diphosphate from 1-deoxy-D-xylulose 5-phosphate: step 5/6. Its function is as follows. Converts 2C-methyl-D-erythritol 2,4-cyclodiphosphate (ME-2,4cPP) into 1-hydroxy-2-methyl-2-(E)-butenyl 4-diphosphate. The chain is 4-hydroxy-3-methylbut-2-en-1-yl diphosphate synthase (flavodoxin) from Corynebacterium diphtheriae (strain ATCC 700971 / NCTC 13129 / Biotype gravis).